Consider the following 252-residue polypeptide: Glucosamine-6-phosphate deaminase (252 aa).

The active-site Proton acceptor; for enolization step is D67. The For ring-opening step role is filled by N137. Residue H139 is the Proton acceptor; for ring-opening step of the active site. E144 acts as the For ring-opening step in catalysis.

It belongs to the glucosamine/galactosamine-6-phosphate isomerase family. NagB subfamily.

It catalyses the reaction alpha-D-glucosamine 6-phosphate + H2O = beta-D-fructose 6-phosphate + NH4(+). It participates in amino-sugar metabolism; N-acetylneuraminate degradation; D-fructose 6-phosphate from N-acetylneuraminate: step 5/5. Catalyzes the reversible isomerization-deamination of glucosamine 6-phosphate (GlcN6P) to form fructose 6-phosphate (Fru6P) and ammonium ion. This chain is Glucosamine-6-phosphate deaminase, found in Staphylococcus aureus (strain Mu3 / ATCC 700698).